The sequence spans 407 residues: Probable tRNA sulfurtransferase (407 aa).

A THUMP domain is found at 61–165 (NEITYRLSKI…LDAIYMYEEV (105 aa)). ATP is bound by residues 183-184 (ML), 208-209 (HF), Arg-265, Gly-287, and Gln-296.

The protein belongs to the ThiI family.

It is found in the cytoplasm. It carries out the reaction [ThiI sulfur-carrier protein]-S-sulfanyl-L-cysteine + a uridine in tRNA + 2 reduced [2Fe-2S]-[ferredoxin] + ATP + H(+) = [ThiI sulfur-carrier protein]-L-cysteine + a 4-thiouridine in tRNA + 2 oxidized [2Fe-2S]-[ferredoxin] + AMP + diphosphate. The enzyme catalyses [ThiS sulfur-carrier protein]-C-terminal Gly-Gly-AMP + S-sulfanyl-L-cysteinyl-[cysteine desulfurase] + AH2 = [ThiS sulfur-carrier protein]-C-terminal-Gly-aminoethanethioate + L-cysteinyl-[cysteine desulfurase] + A + AMP + 2 H(+). It functions in the pathway cofactor biosynthesis; thiamine diphosphate biosynthesis. In terms of biological role, catalyzes the ATP-dependent transfer of a sulfur to tRNA to produce 4-thiouridine in position 8 of tRNAs, which functions as a near-UV photosensor. Also catalyzes the transfer of sulfur to the sulfur carrier protein ThiS, forming ThiS-thiocarboxylate. This is a step in the synthesis of thiazole, in the thiamine biosynthesis pathway. The sulfur is donated as persulfide by IscS. In Staphylococcus aureus (strain bovine RF122 / ET3-1), this protein is Probable tRNA sulfurtransferase.